A 268-amino-acid polypeptide reads, in one-letter code: MLSDILRAVILGIVEGVTEFLPVSSTGHLLLAERFFDLGDTNFWKSFTILIQLGAILAILALYFAKLWRIALGMFSDPAAQRFVIGVLVAFLPAAVIGALAGGYIKSYLFNPWVVCFSLIVGGAILLWVDQLDLQPTQDEATAFPLPMYLYIGCAQCLAMIPGVSRSGATIVGAMLLGADKRAAAEFSFFLAIPTMVGAFVYDLYKNRADMTMDHSLIVAIGFAVSFVTAIIVVKSFLAYVTRHGFTLFAWWRVIVGTLGLIALALGK.

The next 7 helical transmembrane spans lie at 47–67, 83–103, 109–129, 144–164, 184–204, 217–237, and 246–266; these read FTIL…FAKL, FVIG…LAGG, LFNP…LLWV, FPLP…IPGV, AAEF…VYDL, LIVA…VKSF, and FTLF…ALAL.

It belongs to the UppP family.

It localises to the cell inner membrane. It catalyses the reaction di-trans,octa-cis-undecaprenyl diphosphate + H2O = di-trans,octa-cis-undecaprenyl phosphate + phosphate + H(+). Catalyzes the dephosphorylation of undecaprenyl diphosphate (UPP). Confers resistance to bacitracin. The polypeptide is Undecaprenyl-diphosphatase (Rhodopseudomonas palustris (strain BisB18)).